The primary structure comprises 137 residues: Cellular retinoic acid-binding protein 1 (137 aa).

The Nuclear localization signal signature appears at 21–31; it reads KALGVNAMLRK. 132–134 is a binding site for all-trans-retinoate; sequence RIY.

The protein belongs to the calycin superfamily. Fatty-acid binding protein (FABP) family.

It localises to the cytoplasm. Functionally, cytosolic CRABPs may regulate the access of retinoic acid to the nuclear retinoic acid receptors. In Hippocampus comes (Tiger tail seahorse), this protein is Cellular retinoic acid-binding protein 1 (crabp1).